The following is a 269-amino-acid chain: Ice-binding protein (269 aa).

The first 24 residues, 1–24, serve as a signal peptide directing secretion; it reads MLKINRKYAIILAIVAFSSFQTEA. Short sequence motifs (probable ice-binding motif (T/S-X-T)) lie at residues 45-47, 65-67, 128-130, 154-156, 180-182, 198-200, and 218-220; these read TVT, SAT, SAQ, TLT, SIT, and AVT. A PEP C-terminal anchor region spans residues 240–263; it reads VPEPDSSLAVLGSGLVSLLFAFRK. Residues 245 to 261 form a helical membrane-spanning segment; the sequence is SSLAVLGSGLVSLLFAF.

It belongs to the ice-binding protein family.

The protein localises to the cell outer membrane. A probable ice-binding protein that has ice-structuring activities in vitro. Thought not to anchor the cyanobacterium to ice surfaces, as its habitat is shallow puddles fed by glacier meltwater. This Nostoc sp. (strain HG1) protein is Ice-binding protein.